Consider the following 359-residue polypeptide: Nicotinate-nucleotide--dimethylbenzimidazole phosphoribosyltransferase (359 aa).

The active-site Proton acceptor is the E318.

This sequence belongs to the CobT family. Homodimer.

It carries out the reaction 5,6-dimethylbenzimidazole + nicotinate beta-D-ribonucleotide = alpha-ribazole 5'-phosphate + nicotinate + H(+). It participates in nucleoside biosynthesis; alpha-ribazole biosynthesis; alpha-ribazole from 5,6-dimethylbenzimidazole: step 1/2. Its function is as follows. Catalyzes the synthesis of alpha-ribazole-5'-phosphate from nicotinate mononucleotide (NAMN) and 5,6-dimethylbenzimidazole (DMB). This is Nicotinate-nucleotide--dimethylbenzimidazole phosphoribosyltransferase from Escherichia coli (strain UTI89 / UPEC).